Here is an 899-residue protein sequence, read N- to C-terminus: Proline-rich transmembrane protein 4 (899 aa).

The N-terminal stretch at 1 to 23 (MARHGCLGLGLFCCVLFAATVGP) is a signal peptide. Disordered regions lie at residues 110–152 (LTEW…RRST) and 295–340 (TVPI…PEAP). 5 helical membrane-spanning segments follow: residues 370–390 (VGAL…LLPW), 392–412 (CPPG…AGTT), 430–450 (ALAW…GLGL), 467–487 (LAAL…GSAA), and 500–520 (GLHA…SCWG). A Phosphoserine modification is found at Ser641. 2 disordered regions span residues 769 to 797 (TGGR…AWPA) and 839 to 869 (PSGS…ASEL). Low complexity predominate over residues 840 to 851 (SGSSPSLPASGS).

It localises to the membrane. This Homo sapiens (Human) protein is Proline-rich transmembrane protein 4 (PRRT4).